The sequence spans 1305 residues: Contactin-associated protein like 5-3 (1305 aa).

An N-terminal signal peptide occupies residues 1–24 (MDSVPRLNSVFTLVLSGLWHFGLT). The F5/8 type C domain occupies 25–174 (ATNYNCDDPL…IGMRVEVYGC (150 aa)). Residues 25 to 1235 (ATNYNCDDPL…EPLTNAVPSD (1211 aa)) are Extracellular-facing. Laminin G-like domains are found at residues 180–360 (VADF…TFSC) and 367–544 (PITF…IDLC). Asn282 carries an N-linked (GlcNAc...) asparagine glycan. A disulfide bond links Cys329 and Cys360. Asn496 carries an N-linked (GlcNAc...) asparagine glycan. 3 disulfides stabilise this stretch: Cys512–Cys544, Cys550–Cys561, and Cys555–Cys570. Residues 546 to 583 (IKDRCLPNYCEHGGQCAQTWTNFYCNCSDTGYTGATCH) enclose the EGF-like 1 domain. Asn571 carries N-linked (GlcNAc...) asparagine glycosylation. A disulfide bond links Cys572 and Cys582. Residues 584–790 (DSIYEQSCEV…LRCYGDRHFW (207 aa)) form the Fibrinogen C-terminal domain. Positions 791–956 (NAVSFSTEAS…KVTSGVRPGC (166 aa)) constitute a Laminin G-like 3 domain. Disulfide bonds link Cys929-Cys956, Cys960-Cys973, Cys967-Cys982, and Cys984-Cys994. The EGF-like 2 domain maps to 957–995 (PGHCSSYGRNCQNGGKCVEKHIGYSCDCTNSPYEGPFCQ). In terms of domain architecture, Laminin G-like 4 spans 1013–1198 (QEPYSVTKNT…VQRTLTESSC (186 aa)). N-linked (GlcNAc...) asparagine glycans are attached at residues Asn1023 and Asn1057. The cysteines at positions 1163 and 1198 are disulfide-linked. Residues 1236-1256 (LAVIGGIIAVVTFISFSVIGI) form a helical membrane-spanning segment. At 1257-1305 (MTHFFYQHKRSHYASQMKEKEYPENVDSSSRNDIDLQNTTRECKQEDFI) the chain is on the cytoplasmic side.

Belongs to the neurexin family. As to expression, expressed in brain.

It localises to the membrane. In terms of biological role, may play a role in the correct development and proper functioning of the peripheral and central nervous system and be involved in cell adhesion and intercellular communication. The polypeptide is Contactin-associated protein like 5-3 (Cntnap5c) (Mus musculus (Mouse)).